We begin with the raw amino-acid sequence, 308 residues long: Peptidyl-prolyl cis-trans isomerase CYP8 (308 aa).

The PPIase cyclophilin-type domain maps to 56–215 (FTDPESSEEA…QPITIGYISS (160 aa)).

The enzyme catalyses [protein]-peptidylproline (omega=180) = [protein]-peptidylproline (omega=0). PPIases accelerate the folding of proteins. It catalyzes the cis-trans isomerization of proline imidic peptide bonds in oligopeptides. This is Peptidyl-prolyl cis-trans isomerase CYP8 (CPR8) from Saccharomyces cerevisiae (strain ATCC 204508 / S288c) (Baker's yeast).